Consider the following 327-residue polypeptide: Dipeptide transport ATP-binding protein DppD (327 aa).

The ABC transporter domain maps to 4–254; sequence LNVDKLSVHF…PRHPYTQALL (251 aa). 40 to 47 serves as a coordination point for ATP; that stretch reads GESGSGKS.

This sequence belongs to the ABC transporter superfamily. As to quaternary structure, the complex is composed of two ATP-binding proteins (DppD and DppF), two transmembrane proteins (DppB and DppC) and a solute-binding protein (DppA). MppA can replace DppA as binding protein for heme and ALA transport.

It is found in the cell inner membrane. The enzyme catalyses a dipeptide(out) + ATP + H2O = a dipeptide(in) + ADP + phosphate + H(+). Part of the ABC transporter DppABCDF involved in dipeptide transport. Responsible for energy coupling to the transport system. Functionally, when a foreign outer membrane heme receptor is expressed in E.coli, DppABCDF can also transport heme and its precursor, 5-aminolevulinic acid (ALA), from the periplasm into the cytoplasm. This is Dipeptide transport ATP-binding protein DppD (dppD) from Escherichia coli (strain K12).